The chain runs to 491 residues: Transcriptional regulatory protein dep1 (491 aa).

Disordered stretches follow at residues 1–74 (MTEN…LPSQ) and 155–301 (NSVE…DDEK). A compositionally biased stretch (basic and acidic residues) spans 10 to 20 (IPHEILPKEPF). Polar residues-rich tracts occupy residues 54–63 (ALSNPETNAN) and 155–171 (NSVE…TIVS). A compositionally biased stretch (basic and acidic residues) spans 175–186 (KESDFESEEKAT). Residues 187 to 196 (NDNNGLIETN) show a composition bias toward polar residues. Serine 204 carries the post-translational modification Phosphoserine. Over residues 205 to 215 (SEHEEEEDEES) the composition is skewed to acidic residues. Basic and acidic residues-rich tracts occupy residues 216–227 (NIERTEDSDHQI) and 282–301 (REIA…DDEK). Serine 223 carries the phosphoserine modification.

As to quaternary structure, component of the RPD3C(L) complex.

It localises to the nucleus. In terms of biological role, component of the RPD3C(L) histone deacetylase complex (HDAC) responsible for the deacetylation of lysine residues on the N-terminal part of the core histones (H2A, H2B, H3 and H4). Histone deacetylation gives a tag for epigenetic repression and plays an important role in transcriptional regulation, cell cycle progression and developmental events. This chain is Transcriptional regulatory protein dep1 (dep1), found in Schizosaccharomyces pombe (strain 972 / ATCC 24843) (Fission yeast).